Consider the following 980-residue polypeptide: Peroxisomal ATPase PEX6 (980 aa).

Arg-119 carries the post-translational modification Omega-N-methylarginine. Residues 470 to 477 (GPPGCGKT) and 744 to 751 (GPPGTGKT) contribute to the ATP site.

The protein belongs to the AAA ATPase family. As to quaternary structure, interacts with PEX1; forming the PEX1-PEX6 AAA ATPase complex, which is composed of a heterohexamer formed by a trimer of PEX1-PEX6 dimers. Interacts with PEX26; interaction is direct and promotes recruitment to peroxisomal membranes. Interacts with ZFAND6. In terms of tissue distribution, expressed in the retina, at higher levels in the photoreceptor layer at the joint between the outer and inner segments.

The protein resides in the cytoplasm. It localises to the cytosol. It is found in the peroxisome membrane. Its subcellular location is the cell projection. The protein localises to the cilium. The protein resides in the photoreceptor outer segment. The catalysed reaction is ATP + H2O = ADP + phosphate + H(+). Component of the PEX1-PEX6 AAA ATPase complex, a protein dislocase complex that mediates the ATP-dependent extraction of the PEX5 receptor from peroxisomal membranes, an essential step for PEX5 recycling. Specifically recognizes PEX5 monoubiquitinated at 'Cys-11', and pulls it out of the peroxisome lumen through the PEX2-PEX10-PEX12 retrotranslocation channel. Extraction by the PEX1-PEX6 AAA ATPase complex is accompanied by unfolding of the TPR repeats and release of bound cargo from PEX5. The sequence is that of Peroxisomal ATPase PEX6 from Homo sapiens (Human).